A 267-amino-acid chain; its full sequence is MLHVSMVGCGAIGQGVLELLKSDPDVCFDAVIVPEHAMDKAREAIAPFAPNARVTTHLSADAHTDLLVECAGHDALEEHVLPALEQGIDCLVVSVGALSQPGVAERLEAAARRGNAQVQLLSGAIGAIDALAAARVGGLDAVIYTGRKPPRAWKDTPAEQQFDLDALREPTVIFEGNAREAARLFPKNANVAATLSLAGLGLEHTHVKLLADPTVDENIHHVEARGAFGGFELTMRGKPLAANPKTSALTVFSVVRALGNRAHAVSI.

Residues Ala-124 and Asn-190 each contribute to the NAD(+) site. Residue His-220 is part of the active site.

The protein belongs to the L-aspartate dehydrogenase family.

It carries out the reaction L-aspartate + NADP(+) + H2O = oxaloacetate + NH4(+) + NADPH + H(+). The enzyme catalyses L-aspartate + NAD(+) + H2O = oxaloacetate + NH4(+) + NADH + H(+). It participates in cofactor biosynthesis; NAD(+) biosynthesis; iminoaspartate from L-aspartate (dehydrogenase route): step 1/1. Functionally, specifically catalyzes the NAD or NADP-dependent dehydrogenation of L-aspartate to iminoaspartate. The protein is L-aspartate dehydrogenase of Ralstonia pickettii (strain 12J).